A 564-amino-acid polypeptide reads, in one-letter code: Dihydroxy-acid dehydratase (564 aa).

Cys-55 provides a ligand contact to [2Fe-2S] cluster. Asp-87 lines the Mg(2+) pocket. A [2Fe-2S] cluster-binding site is contributed by Cys-128. Asp-129 and Lys-130 together coordinate Mg(2+). Lys-130 is subject to N6-carboxylysine. Residue Cys-200 coordinates [2Fe-2S] cluster. Glu-452 is a Mg(2+) binding site. Ser-478 functions as the Proton acceptor in the catalytic mechanism.

Belongs to the IlvD/Edd family. In terms of assembly, homodimer. The cofactor is [2Fe-2S] cluster. Mg(2+) is required as a cofactor.

It carries out the reaction (2R)-2,3-dihydroxy-3-methylbutanoate = 3-methyl-2-oxobutanoate + H2O. The catalysed reaction is (2R,3R)-2,3-dihydroxy-3-methylpentanoate = (S)-3-methyl-2-oxopentanoate + H2O. It functions in the pathway amino-acid biosynthesis; L-isoleucine biosynthesis; L-isoleucine from 2-oxobutanoate: step 3/4. The protein operates within amino-acid biosynthesis; L-valine biosynthesis; L-valine from pyruvate: step 3/4. Functionally, functions in the biosynthesis of branched-chain amino acids. Catalyzes the dehydration of (2R,3R)-2,3-dihydroxy-3-methylpentanoate (2,3-dihydroxy-3-methylvalerate) into 2-oxo-3-methylpentanoate (2-oxo-3-methylvalerate) and of (2R)-2,3-dihydroxy-3-methylbutanoate (2,3-dihydroxyisovalerate) into 2-oxo-3-methylbutanoate (2-oxoisovalerate), the penultimate precursor to L-isoleucine and L-valine, respectively. The polypeptide is Dihydroxy-acid dehydratase (Polaromonas sp. (strain JS666 / ATCC BAA-500)).